We begin with the raw amino-acid sequence, 361 residues long: Peptide chain release factor 1 (361 aa).

Gln236 bears the N5-methylglutamine mark.

Belongs to the prokaryotic/mitochondrial release factor family. Post-translationally, methylated by PrmC. Methylation increases the termination efficiency of RF1.

It localises to the cytoplasm. Peptide chain release factor 1 directs the termination of translation in response to the peptide chain termination codons UAG and UAA. In Levilactobacillus brevis (strain ATCC 367 / BCRC 12310 / CIP 105137 / JCM 1170 / LMG 11437 / NCIMB 947 / NCTC 947) (Lactobacillus brevis), this protein is Peptide chain release factor 1.